We begin with the raw amino-acid sequence, 287 residues long: Shikimate kinase 3, chloroplastic (287 aa).

A chloroplast-targeting transit peptide spans 1–57 (MDAGVGLRAKPGAWAGLGNPRRSSTARVPVRFAVEKFAQPLVLGSDRRSCGAKLKVS). 98–105 (GMMGSGKT) serves as a coordination point for ATP. Thr-105 is a binding site for Mg(2+). Substrate-binding residues include Asp-123, Arg-148, and Gly-170. Residue Arg-209 participates in ATP binding.

It belongs to the shikimate kinase family. Mg(2+) is required as a cofactor. As to expression, expressed in panicles.

It localises to the plastid. Its subcellular location is the chloroplast. It catalyses the reaction shikimate + ATP = 3-phosphoshikimate + ADP + H(+). It functions in the pathway metabolic intermediate biosynthesis; chorismate biosynthesis; chorismate from D-erythrose 4-phosphate and phosphoenolpyruvate: step 5/7. Catalyzes the specific phosphorylation of the 3-hydroxyl group of shikimic acid using ATP as a cosubstrate. The polypeptide is Shikimate kinase 3, chloroplastic (SK3) (Oryza sativa subsp. japonica (Rice)).